The sequence spans 488 residues: MSGTVKDIVSKAELDNLRQSGAPVVLHFWASWCDASKQMDQVFSHLATDFPRAHFFRVEAEEHPEISEAYSVAAVPYFVFFKDGKTVDTLEGADPSSLANKVGKVAGSSTSAEPAAPASLGLAAGPTILETVKENAKASLQDRAQPVSTADALKSRLEKLTNSHPVMLFMKGIPEEPRCGFSRKVVDILKEVNVDFGSFDILSDNEVREGLKKFSNWPTFPQLYCNGELLGGADIAIAMHESGELKDAFKDLGITTVGSKESQDEAGKGGGVSSGNTGLSETLRARLEGLVNSKPVMLFMKGRPEEPKCGFSGKVVEILNQEKIEFGSFDILLDDEVRQGLKVYSNWSSYPQLYVKGELMGGSDIVLEMQKSGELKKVLTEKGITGEQSLEDRLKALINSSEVMLFMKGSPDEPKCGFSSKVVKALRGENVSFGSFDILTDEEVRQGIKNFSNWPTFPQLYYKGELIGGCDIIMELSESGDLKATLSE.

One can recognise a Thioredoxin domain in the interval 2 to 107; sequence SGTVKDIVSK…LANKVGKVAG (106 aa). Glutaredoxin domains are found at residues 154–256, 284–386, and 391–488; these read KSRL…GITT, RARL…GITG, and EDRL…TLSE. A glutathione-binding site is contributed by lysine 408. Cysteine 416 is a binding site for [2Fe-2S] cluster. Glutathione is bound by residues arginine 445, phenylalanine 457, and 470–471; that span reads CD.

It belongs to the glutaredoxin family. CGFS subfamily. As to quaternary structure, [2Fe-2S]-bridged holo-homodimer. Interacts in vitro with SUFE1, BOLA1, BOLA2 and BOLA4. Interacts in vivo only with BOLA2. Interacts with RGLG3 and RGLG4. In terms of processing, ubiquitinated at Lys-154. Polyubiquitinated by RGLG3 and RGLG4. Polyubiquitination of GRXS17 leads to its degradation by the proteasome.

Its subcellular location is the cytoplasm. Functionally, may only reduce GSH-thiol disulfides, but not protein disulfides. Participates probably to the maturation of iron-sulfur proteins and to the regulation of the redox state of the BOLA proteins. The GRXS17-BOLA2 heterodimer binds a labile, oxygen sensitive iron-sulfur cluster. This Arabidopsis thaliana (Mouse-ear cress) protein is Monothiol glutaredoxin-S17.